The sequence spans 297 residues: Nucleotide-binding protein Bphyt_0592 (297 aa).

8-15 (GISGSGKS) contacts ATP. A GTP-binding site is contributed by 57-60 (DARS).

This sequence belongs to the RapZ-like family.

Functionally, displays ATPase and GTPase activities. This is Nucleotide-binding protein Bphyt_0592 from Paraburkholderia phytofirmans (strain DSM 17436 / LMG 22146 / PsJN) (Burkholderia phytofirmans).